A 299-amino-acid polypeptide reads, in one-letter code: Bifunctional protein FolD (299 aa).

NADP(+) is bound by residues 169–171 (GRS), serine 194, and isoleucine 235.

It belongs to the tetrahydrofolate dehydrogenase/cyclohydrolase family. As to quaternary structure, homodimer.

It carries out the reaction (6R)-5,10-methylene-5,6,7,8-tetrahydrofolate + NADP(+) = (6R)-5,10-methenyltetrahydrofolate + NADPH. It catalyses the reaction (6R)-5,10-methenyltetrahydrofolate + H2O = (6R)-10-formyltetrahydrofolate + H(+). Its pathway is one-carbon metabolism; tetrahydrofolate interconversion. Functionally, catalyzes the oxidation of 5,10-methylenetetrahydrofolate to 5,10-methenyltetrahydrofolate and then the hydrolysis of 5,10-methenyltetrahydrofolate to 10-formyltetrahydrofolate. This Trichormus variabilis (strain ATCC 29413 / PCC 7937) (Anabaena variabilis) protein is Bifunctional protein FolD.